Consider the following 258-residue polypeptide: F-box/SPRY domain-containing protein 1 (258 aa).

The 49-residue stretch at 6–54 (TEYAPDIPDNVLELIFSYLKLQDLRNCSLVCKSWNRFLNDENNEVWRAQ) folds into the F-box domain. The B30.2/SPRY domain maps to 64–256 (FKTDLLSVVP…ISMVYLGPPL (193 aa)).

Belongs to the FBXO45/Fsn family. Component of an E3 ubiquitin ligase complex composed of hiw and Fsn.

Its subcellular location is the synapse. Its pathway is protein modification; protein ubiquitination. In terms of biological role, required in the presynaptic motoneuron to down-regulate the levels of wnd and restrain synaptic terminal growth at the neuromuscular junction (NMJ). The polypeptide is F-box/SPRY domain-containing protein 1 (Aedes aegypti (Yellowfever mosquito)).